We begin with the raw amino-acid sequence, 323 residues long: MTKTFRNPQLTKNGELKHLLSIEGLSRDMITHILDTASQFVSLSDSDREVKKVPLLRGKSVFNLFFENSTRTRTTFEIAAKRLSADVLNLNINASSTSKGESLLDTINNLSAMSADMFVVRHASSGAPYLIAEHVAPHVHVINAGDGRHAHPTQGLLDMYTIRHFKKDFTNLTVAIVGDILHSRVARSDIHALTTLGVPEVRAIGPRTLLPSGLEQMGVRVFHNMEEGLKGVDVVIMLRLQNERMTGALLPSAQEYFKAYGLTPERLALAKPDAIVMHPGPMNRGVEIDSAVADGPQSVILNQVTFGIAVRMAVMGIVAGNND.

The carbamoyl phosphate site is built by R71 and T72. Position 99 (K99) interacts with L-aspartate. Residues R121, H151, and Q154 each coordinate carbamoyl phosphate. L-aspartate is bound by residues R184 and R239. The carbamoyl phosphate site is built by G280 and P281.

This sequence belongs to the aspartate/ornithine carbamoyltransferase superfamily. ATCase family. Heterododecamer (2C3:3R2) of six catalytic PyrB chains organized as two trimers (C3), and six regulatory PyrI chains organized as three dimers (R2).

The enzyme catalyses carbamoyl phosphate + L-aspartate = N-carbamoyl-L-aspartate + phosphate + H(+). It functions in the pathway pyrimidine metabolism; UMP biosynthesis via de novo pathway; (S)-dihydroorotate from bicarbonate: step 2/3. In terms of biological role, catalyzes the condensation of carbamoyl phosphate and aspartate to form carbamoyl aspartate and inorganic phosphate, the committed step in the de novo pyrimidine nucleotide biosynthesis pathway. This is Aspartate carbamoyltransferase catalytic subunit from Cupriavidus metallidurans (strain ATCC 43123 / DSM 2839 / NBRC 102507 / CH34) (Ralstonia metallidurans).